A 1158-amino-acid chain; its full sequence is Protein transport protein Sec31B (1158 aa).

WD repeat units lie at residues 4-47 (KELE…EIFE), 65-110 (VSSR…SSGK), 119-159 (KHTG…VPMT), 166-206 (NPPE…PIIK), 209-254 (SHSS…SPLK), 258-298 (SHSR…VVYK), and 301-341 (TQSS…WEAQ). A WD 8; interaction with SEC13 repeat occupies 376–407 (SFAFGGKLVTFGLPSIPVQPVAQACSRPVFIS). 3 disordered regions span residues 485-520 (LKSD…HTAK), 797-843 (TSSY…SSDH), and 968-1010 (GPQD…PEPQ). Residues 822–840 (QPSSVMPFSPSQPSPSQGS) show a composition bias toward low complexity.

The protein belongs to the WD repeat SEC31 family. In terms of assembly, COPII is composed of at least 5 proteins: the SEC23/24 complex, the SEC13/31 complex and SAR1. SEC13 and SEC31 make a 2:2 tetramer that forms the edge element of the COPII outer coat. The tetramer self-assembles in multiple copies to form the complete polyhedral cage. Interacts (via WD 8) with SEC13. Interacts with SEC31A. Post-translationally, monoubiquitinated by the BCR(KLHL12) E3 ubiquitin ligase complex, leading to regulate the size of COPII coats.

The protein localises to the cytoplasm. Its subcellular location is the cytoplasmic vesicle. It is found in the COPII-coated vesicle membrane. It localises to the endoplasmic reticulum membrane. Its function is as follows. As a component of the coat protein complex II (COPII), may function in vesicle budding and cargo export from the endoplasmic reticulum. This chain is Protein transport protein Sec31B (Sec31b), found in Mus musculus (Mouse).